A 218-amino-acid chain; its full sequence is NAD(P)H-quinone oxidoreductase subunit I (218 aa).

2 consecutive 4Fe-4S ferredoxin-type domains span residues 55–84 (GRIHYEFDKCIACEVCVRVCPINLPVVDWV) and 95–124 (RNYSIDFGVCIFCGNCVEYCPTNCLSMTEE). The [4Fe-4S] cluster site is built by cysteine 64, cysteine 67, cysteine 70, cysteine 74, cysteine 104, cysteine 107, cysteine 110, and cysteine 114. The tract at residues 168-218 (EVQPHGVDPSRPRAGQRPDQVLSSLKQNAGGSAGNEGESATSTNTSKGSAE) is disordered. Over residues 208–218 (TSTNTSKGSAE) the composition is skewed to polar residues.

It belongs to the complex I 23 kDa subunit family. NDH-1 is composed of at least 11 different subunits. It depends on [4Fe-4S] cluster as a cofactor.

The protein resides in the cellular thylakoid membrane. The catalysed reaction is a plastoquinone + NADH + (n+1) H(+)(in) = a plastoquinol + NAD(+) + n H(+)(out). It carries out the reaction a plastoquinone + NADPH + (n+1) H(+)(in) = a plastoquinol + NADP(+) + n H(+)(out). In terms of biological role, NDH-1 shuttles electrons from an unknown electron donor, via FMN and iron-sulfur (Fe-S) centers, to quinones in the respiratory and/or the photosynthetic chain. The immediate electron acceptor for the enzyme in this species is believed to be plastoquinone. Couples the redox reaction to proton translocation, and thus conserves the redox energy in a proton gradient. This Synechococcus sp. (strain WH7803) protein is NAD(P)H-quinone oxidoreductase subunit I.